A 343-amino-acid chain; its full sequence is L-threonine 3-dehydrogenase (343 aa).

Cys-38 is a Zn(2+) binding site. Active-site charge relay system residues include Thr-40 and His-43. The Zn(2+) site is built by His-63, Glu-64, Cys-93, Cys-96, Cys-99, and Cys-107. NAD(+) contacts are provided by residues Ile-175, Asp-195, Arg-200, 262–264, and 286–287; these read LGI and IY.

The protein belongs to the zinc-containing alcohol dehydrogenase family. In terms of assembly, homotetramer. Zn(2+) serves as cofactor.

It localises to the cytoplasm. It carries out the reaction L-threonine + NAD(+) = (2S)-2-amino-3-oxobutanoate + NADH + H(+). Its pathway is amino-acid degradation; L-threonine degradation via oxydo-reductase pathway; glycine from L-threonine: step 1/2. Its function is as follows. Catalyzes the NAD(+)-dependent oxidation of L-threonine to 2-amino-3-ketobutyrate. The sequence is that of L-threonine 3-dehydrogenase from Pectobacterium carotovorum subsp. carotovorum (strain PC1).